Consider the following 485-residue polypeptide: Protein nucleotidyltransferase YdiU (485 aa).

The ATP site is built by glycine 90, glycine 92, arginine 93, lysine 113, aspartate 125, glycine 126, arginine 176, and arginine 183. Aspartate 252 functions as the Proton acceptor in the catalytic mechanism. Mg(2+) is bound by residues asparagine 253 and aspartate 262. Aspartate 262 provides a ligand contact to ATP.

The protein belongs to the SELO family. Mg(2+) is required as a cofactor. Requires Mn(2+) as cofactor.

The enzyme catalyses L-seryl-[protein] + ATP = 3-O-(5'-adenylyl)-L-seryl-[protein] + diphosphate. The catalysed reaction is L-threonyl-[protein] + ATP = 3-O-(5'-adenylyl)-L-threonyl-[protein] + diphosphate. It catalyses the reaction L-tyrosyl-[protein] + ATP = O-(5'-adenylyl)-L-tyrosyl-[protein] + diphosphate. It carries out the reaction L-histidyl-[protein] + UTP = N(tele)-(5'-uridylyl)-L-histidyl-[protein] + diphosphate. The enzyme catalyses L-seryl-[protein] + UTP = O-(5'-uridylyl)-L-seryl-[protein] + diphosphate. The catalysed reaction is L-tyrosyl-[protein] + UTP = O-(5'-uridylyl)-L-tyrosyl-[protein] + diphosphate. Nucleotidyltransferase involved in the post-translational modification of proteins. It can catalyze the addition of adenosine monophosphate (AMP) or uridine monophosphate (UMP) to a protein, resulting in modifications known as AMPylation and UMPylation. This is Protein nucleotidyltransferase YdiU from Aliivibrio fischeri (strain ATCC 700601 / ES114) (Vibrio fischeri).